The sequence spans 729 residues: Phosphoribosylformylglycinamidine synthase subunit PurL (729 aa).

The active site involves histidine 54. Positions 57 and 96 each coordinate ATP. Position 98 (glutamate 98) interacts with Mg(2+). Substrate is bound by residues 99 to 102 and arginine 121; that span reads SHNH. The active-site Proton acceptor is histidine 100. Aspartate 122 is a binding site for Mg(2+). Residue glutamine 245 coordinates substrate. Aspartate 273 contributes to the Mg(2+) binding site. A substrate-binding site is contributed by 317 to 319; it reads ETQ. The ATP site is built by aspartate 495 and glycine 532. Asparagine 533 provides a ligand contact to Mg(2+). Position 535 (serine 535) interacts with substrate.

It belongs to the FGAMS family. In terms of assembly, monomer. Part of the FGAM synthase complex composed of 1 PurL, 1 PurQ and 2 PurS subunits.

It localises to the cytoplasm. The enzyme catalyses N(2)-formyl-N(1)-(5-phospho-beta-D-ribosyl)glycinamide + L-glutamine + ATP + H2O = 2-formamido-N(1)-(5-O-phospho-beta-D-ribosyl)acetamidine + L-glutamate + ADP + phosphate + H(+). Its pathway is purine metabolism; IMP biosynthesis via de novo pathway; 5-amino-1-(5-phospho-D-ribosyl)imidazole from N(2)-formyl-N(1)-(5-phospho-D-ribosyl)glycinamide: step 1/2. In terms of biological role, part of the phosphoribosylformylglycinamidine synthase complex involved in the purines biosynthetic pathway. Catalyzes the ATP-dependent conversion of formylglycinamide ribonucleotide (FGAR) and glutamine to yield formylglycinamidine ribonucleotide (FGAM) and glutamate. The FGAM synthase complex is composed of three subunits. PurQ produces an ammonia molecule by converting glutamine to glutamate. PurL transfers the ammonia molecule to FGAR to form FGAM in an ATP-dependent manner. PurS interacts with PurQ and PurL and is thought to assist in the transfer of the ammonia molecule from PurQ to PurL. This Staphylococcus haemolyticus (strain JCSC1435) protein is Phosphoribosylformylglycinamidine synthase subunit PurL.